Consider the following 30-residue polypeptide: Photosystem I reaction center subunit XII (30 aa).

Residues I7 to Y29 traverse the membrane as a helical segment.

Belongs to the PsaM family.

It localises to the plastid. The protein resides in the chloroplast thylakoid membrane. The chain is Photosystem I reaction center subunit XII from Phaeodactylum tricornutum (strain CCAP 1055/1).